Consider the following 85-residue polypeptide: Beta-insect depressant toxin Lqh-dprIT3f (85 aa).

A signal peptide spans 1 to 21 (MKLLLLLTISASMLIEGLVNA). The 61-residue stretch at 22–82 (DGYIRGGDGC…EWDYETDTCG (61 aa)) folds into the LCN-type CS-alpha/beta domain. Cystine bridges form between cysteine 31/cysteine 81, cysteine 35/cysteine 56, cysteine 42/cysteine 63, and cysteine 46/cysteine 65. A Glycine amide modification is found at glycine 82.

The protein belongs to the long (4 C-C) scorpion toxin superfamily. Sodium channel inhibitor family. Beta subfamily. Expressed by the venom gland.

The protein localises to the secreted. In terms of biological role, depressant insect beta-toxins cause a transient contraction paralysis followed by a slow flaccid paralysis. They bind voltage-independently at site-4 of sodium channels (Nav) and block action potentials, primarily by depolarizing the axonal membrane and suppressing the sodium current. This depressant toxin is active only on insects. It is found in a relatively small amount in the venom. This Leiurus hebraeus (Hebrew deathstalker scorpion) protein is Beta-insect depressant toxin Lqh-dprIT3f.